The following is a 338-amino-acid chain: Fructose-1,6-bisphosphatase class 1 1 (338 aa).

Mg(2+) is bound by residues E91, D113, L115, and D116. Substrate-binding positions include 116-119, N208, and K274; that span reads DGSS. E280 provides a ligand contact to Mg(2+).

Belongs to the FBPase class 1 family. Homotetramer. The cofactor is Mg(2+).

It is found in the cytoplasm. It carries out the reaction beta-D-fructose 1,6-bisphosphate + H2O = beta-D-fructose 6-phosphate + phosphate. Its pathway is carbohydrate biosynthesis; gluconeogenesis. This Cupriavidus metallidurans (strain ATCC 43123 / DSM 2839 / NBRC 102507 / CH34) (Ralstonia metallidurans) protein is Fructose-1,6-bisphosphatase class 1 1.